We begin with the raw amino-acid sequence, 329 residues long: Ribosomal protein L11 methyltransferase (329 aa).

The S-adenosyl-L-methionine site is built by T177, G198, D220, and N264.

It belongs to the methyltransferase superfamily. PrmA family.

The protein resides in the cytoplasm. The catalysed reaction is L-lysyl-[protein] + 3 S-adenosyl-L-methionine = N(6),N(6),N(6)-trimethyl-L-lysyl-[protein] + 3 S-adenosyl-L-homocysteine + 3 H(+). Functionally, methylates ribosomal protein L11. The polypeptide is Ribosomal protein L11 methyltransferase (Helicobacter pylori (strain Shi470)).